Consider the following 136-residue polypeptide: Piercer of microtubule wall 1 protein (136 aa).

The disordered stretch occupies residues 1–24 (MAEECPRACAEPVAPKATAPPERT).

The protein belongs to the PIERCE1 family. As to quaternary structure, microtubule inner protein component of sperm flagellar doublet microtubules. Interacts with CFAP53, ODAD1 and ODAD3; the interactions link the outer dynein arms docking complex (ODA-DC) to the internal microtubule inner proteins (MIP) in cilium axoneme. As to expression, expressed in airway epithelial cells.

It localises to the cytoplasm. The protein resides in the cytoskeleton. Its subcellular location is the cilium axoneme. The protein localises to the flagellum axoneme. Microtubule inner protein involved in the attachment of outer dynein arms (ODAs) to dynein-decorated doublet microtubules (DMTs) in cilia axoneme, which is required for motile cilia beating. Functions at the initial step of left-right asymmetry specification of the visceral organs. The sequence is that of Piercer of microtubule wall 1 protein from Homo sapiens (Human).